The following is a 306-amino-acid chain: Phenylcoumaran benzylic ether reductase IRL1 (306 aa).

NADP(+) is bound by residues 10-16 (GATGYIG), R35, and K44. K132 functions as the Proton acceptor in the catalytic mechanism. R136 lines the NADP(+) pocket.

It belongs to the NmrA-type oxidoreductase family. Isoflavone reductase subfamily. Highly expressed in sclerotesta. Expressed in roots, and two-to-four year stems.

The enzyme catalyses (-)-dehydrodiconiferyl alcohol + NADPH + H(+) = (S)-isodihydrodehydrodiconiferyl alcohol + NADP(+). It catalyses the reaction (+)-dehydrodiconiferyl alcohol + NADPH + H(+) = (R)-isodihydrodehydrodiconiferyl alcohol + NADP(+). It carries out the reaction (2R,3S)-dihydrodehydrodiconiferyl alcohol + NADPH + H(+) = (S)-tetrahydrodehydrodiconiferyl alcohol + NADP(+). The catalysed reaction is (2S,3R)-dihydrodehydrodiconiferyl alcohol + NADPH + H(+) = (R)-tetrahydrodehydrodiconiferyl alcohol + NADP(+). Oxidoreductase involved in lignan biosynthesis. Catalyzes the NADPH-dependent reduction of phenylcoumaran benzylic ethers. Converts dehydrodiconiferyl alcohol (DDC) to isodihydrodehydrodiconiferyl alcohol (IDDDC), and dihydrodehydrodiconiferyl alcohol (DDDC) to tetrahydrodehydrodiconiferyl alcohol (TDDC). May regulate changes in lignin content and accumulation of flavonoids. The polypeptide is Phenylcoumaran benzylic ether reductase IRL1 (Ginkgo biloba (Ginkgo)).